A 513-amino-acid polypeptide reads, in one-letter code: ATP synthase subunit alpha (513 aa).

172 to 179 (GDRQTGKT) provides a ligand contact to ATP.

This sequence belongs to the ATPase alpha/beta chains family. In terms of assembly, F-type ATPases have 2 components, CF(1) - the catalytic core - and CF(0) - the membrane proton channel. CF(1) has five subunits: alpha(3), beta(3), gamma(1), delta(1), epsilon(1). CF(0) has three main subunits: a(1), b(2) and c(9-12). The alpha and beta chains form an alternating ring which encloses part of the gamma chain. CF(1) is attached to CF(0) by a central stalk formed by the gamma and epsilon chains, while a peripheral stalk is formed by the delta and b chains.

It localises to the cell inner membrane. The catalysed reaction is ATP + H2O + 4 H(+)(in) = ADP + phosphate + 5 H(+)(out). Functionally, produces ATP from ADP in the presence of a proton gradient across the membrane. The alpha chain is a regulatory subunit. The polypeptide is ATP synthase subunit alpha (Gluconacetobacter diazotrophicus (strain ATCC 49037 / DSM 5601 / CCUG 37298 / CIP 103539 / LMG 7603 / PAl5)).